A 74-amino-acid polypeptide reads, in one-letter code: Anionic peptide clone 8 (74 aa).

Positions 1-24 (MVSKSLIVLLLVSVLVSTFFTTEA) are cleaved as a signal peptide.

Belongs to the non-disulfide-bridged peptide (NDBP) superfamily. Long chain multifunctional peptide (group 2) family. In terms of tissue distribution, expressed by the venom gland.

It is found in the secreted. May be an antimicrobial peptide. This chain is Anionic peptide clone 8, found in Tityus costatus (Brazilian scorpion).